The chain runs to 321 residues: Serine protease 52 (321 aa).

The signal sequence occupies residues 1–27 (MKRWKDRRTGLLLPLVLLLFGACSSLA). In terms of domain architecture, Peptidase S1 spans 56–287 (IVGGKPANIL…YVRWISKQTA (232 aa)). The cysteines at positions 81 and 97 are disulfide-linked. Catalysis depends on charge relay system residues histidine 96 and aspartate 142. A glycan (N-linked (GlcNAc...) asparagine) is linked at asparagine 153. Intrachain disulfides connect cysteine 175/cysteine 242, cysteine 208/cysteine 221, and cysteine 232/cysteine 263. Serine 236 (charge relay system) is an active-site residue. The chain crosses the membrane as a helical span at residues 300-320 (ACPLVLSCRAILFLYFVMFLL).

Belongs to the peptidase S1 family.

It localises to the membrane. Functionally, probable serine protease. This chain is Serine protease 52 (Prss52), found in Mus musculus (Mouse).